Here is a 737-residue protein sequence, read N- to C-terminus: Tripartite terminase subunit 3 (737 aa).

Residues 188-194 (VKKRARI) carry the Nuclear localization signal motif. Positions 263 to 270 (VPRRHGKT) match the Walker A motif motif. Residues 357–362 (LLFVDE) carry the Walker B motif motif. The active-site For ATPase activity is the Glu362. Active-site for nuclease activity residues include Asp517, Glu589, and Asp712.

It belongs to the herpesviridae TRM3 protein family. In terms of assembly, interacts with the terminase subunits TRM1 and TRM2. Interacts with portal protein.

The protein localises to the host nucleus. In terms of biological role, component of the molecular motor that translocates viral genomic DNA in empty capsid during DNA packaging. Forms a tripartite terminase complex together with TRM1 and TRM2 in the host cytoplasm. Once the complex reaches the host nucleus, it interacts with the capsid portal vertex. This portal forms a ring in which genomic DNA is translocated into the capsid. TRM3 carries an RNase H-like nuclease activity that plays an important role for the cleavage of concatemeric viral DNA into unit length genomes. This is Tripartite terminase subunit 3 from Gallus gallus (Chicken).